The primary structure comprises 143 residues: Large ribosomal subunit protein uL11 (143 aa).

Belongs to the universal ribosomal protein uL11 family. Part of the ribosomal stalk of the 50S ribosomal subunit. Interacts with L10 and the large rRNA to form the base of the stalk. L10 forms an elongated spine to which L12 dimers bind in a sequential fashion forming a multimeric L10(L12)X complex. In terms of processing, one or more lysine residues are methylated.

Its function is as follows. Forms part of the ribosomal stalk which helps the ribosome interact with GTP-bound translation factors. The sequence is that of Large ribosomal subunit protein uL11 from Nitrosospira multiformis (strain ATCC 25196 / NCIMB 11849 / C 71).